We begin with the raw amino-acid sequence, 319 residues long: Putative G-protein coupled receptor B0244.7 (319 aa).

An N-linked (GlcNAc...) asparagine glycan is attached at Asn-28. 6 helical membrane passes run 49–69 (AIFIIPCCMSFFALFLNIYIF), 107–127 (LPVIIFLTHFNFWVIALFIIF), 131–151 (SFLSFIGGMVGTTLTIYIAVV), 166–186 (VLLILLLWVSAITVAISCGIV), 206–226 (GPVLIFGIVCIATAFSICLVI), and 261–281 (LFAGFFVFATMAIFEIASAII).

The protein belongs to the G-protein coupled receptor 1 family. B0244 subfamily.

It is found in the cell membrane. The sequence is that of Putative G-protein coupled receptor B0244.7 from Caenorhabditis elegans.